A 1080-amino-acid polypeptide reads, in one-letter code: Zorya protein ZorD (1080 aa).

The Helicase ATP-binding domain occupies 596–779; the sequence is LRSPEETAGC…WSLFDFAQPG (184 aa). A Helicase C-terminal domain is found at 904 to 1069; that stretch reads KLNWLLKILA…DMLCATPDLS (166 aa).

Its function is as follows. Component of antiviral defense system Zorya type I, composed of ZorA, ZorB, ZorC and ZorD. Expression of Zorya type I in E.coli (strain MG1655) confers 10,000-fold resistance to phage SECphi27, 100-fold resistance to lambda, and 10-fold resistance to T7. While most T7 infected Zorya-containing cells undergo abortive infection, a minority produce viable phage progeny. These eventually accumulate to a high multiplicity of infection, leading to culture collapse by 2 hours after initial infection. ZorA and ZorB probably assemble in the cell inner membrane and exert their effect there. This may have ATPase activity. This is Zorya protein ZorD from Escherichia coli O139:H28 (strain E24377A / ETEC).